Reading from the N-terminus, the 344-residue chain is Ferrochelatase (344 aa).

Residues His-214 and Glu-295 each contribute to the Fe cation site.

Belongs to the ferrochelatase family.

The protein localises to the cytoplasm. It carries out the reaction heme b + 2 H(+) = protoporphyrin IX + Fe(2+). It participates in porphyrin-containing compound metabolism; protoheme biosynthesis; protoheme from protoporphyrin-IX: step 1/1. In terms of biological role, catalyzes the ferrous insertion into protoporphyrin IX. The sequence is that of Ferrochelatase from Rhizobium etli (strain CIAT 652).